Here is a 309-residue protein sequence, read N- to C-terminus: MRIFFASSESIALEVLKKVADQHNVVGVLTAPDKPSGRGLFLRANDIKVEATNRNITVLDPVVLNSDVVEIVKRLNPDLMLVFSYGKIFRQEFLDIFPMGCINVHPSLLPKYRGPSPIQTAILNGDTVGGITVQKMALEMDSGNILSQSQFEIKSFNTSADIFRYVSLNSFNLVLEALSKLDKGNIGIEQDSRQATYCSFFNKQHRILDFNLSAFEIKNKINACNPWPLARAKLDDDEIIFHRADFIRTNDYSDQAIGKIILFDPSRGILVKTGDGILLLLELQRAGRKVMDYKSFYNGNRDLIGKIFS.

107-110 (SLLP) lines the (6S)-5,6,7,8-tetrahydrofolate pocket.

This sequence belongs to the Fmt family.

It catalyses the reaction L-methionyl-tRNA(fMet) + (6R)-10-formyltetrahydrofolate = N-formyl-L-methionyl-tRNA(fMet) + (6S)-5,6,7,8-tetrahydrofolate + H(+). Its function is as follows. Attaches a formyl group to the free amino group of methionyl-tRNA(fMet). The formyl group appears to play a dual role in the initiator identity of N-formylmethionyl-tRNA by promoting its recognition by IF2 and preventing the misappropriation of this tRNA by the elongation apparatus. This is Methionyl-tRNA formyltransferase from Borrelia hermsii (strain HS1 / DAH).